The chain runs to 88 residues: Small ribosomal subunit protein bS20 (88 aa).

Positions 1–27 (MANSKSAKKRALQSEKRRQHNASRRSM) are disordered.

It belongs to the bacterial ribosomal protein bS20 family.

Its function is as follows. Binds directly to 16S ribosomal RNA. The chain is Small ribosomal subunit protein bS20 from Shewanella frigidimarina (strain NCIMB 400).